We begin with the raw amino-acid sequence, 270 residues long: tRNA pseudouridine synthase A (270 aa).

The Nucleophile role is filled by aspartate 51. Residue tyrosine 109 participates in substrate binding.

Belongs to the tRNA pseudouridine synthase TruA family. In terms of assembly, homodimer.

The catalysed reaction is uridine(38/39/40) in tRNA = pseudouridine(38/39/40) in tRNA. Its function is as follows. Formation of pseudouridine at positions 38, 39 and 40 in the anticodon stem and loop of transfer RNAs. This chain is tRNA pseudouridine synthase A, found in Burkholderia mallei (strain ATCC 23344).